We begin with the raw amino-acid sequence, 431 residues long: UDP-N-acetylmuramate--L-alanine ligase (431 aa).

Residue 108–114 participates in ATP binding; it reads GAHGKST.

This sequence belongs to the MurCDEF family.

The protein localises to the cytoplasm. It carries out the reaction UDP-N-acetyl-alpha-D-muramate + L-alanine + ATP = UDP-N-acetyl-alpha-D-muramoyl-L-alanine + ADP + phosphate + H(+). The protein operates within cell wall biogenesis; peptidoglycan biosynthesis. Its function is as follows. Cell wall formation. This Campylobacter jejuni (strain RM1221) protein is UDP-N-acetylmuramate--L-alanine ligase.